The chain runs to 405 residues: Indoleamine 2,3-dioxygenase acdA (405 aa).

Position 312 (histidine 312) interacts with heme.

It belongs to the indoleamine 2,3-dioxygenase family. Heme serves as cofactor.

The enzyme catalyses L-tryptophan + O2 = N-formyl-L-kynurenine. Its pathway is secondary metabolite biosynthesis. Functionally, indoleamine 2,3-dioxygenase; part of the gene cluster that mediates the biosynthesis of aspcandine, a pyrrolobenzazepine alkaloid. Initially, the indoleamine 2,3-dioxygenase acdA accepts L-tryptophan and performs the oxidative opening of the indole ring to yield N'-formyl-L-kynurenine, which undergoes the spontaneous deformylation reaction to provide L-kynurenine. The kynurenine 3-monooxygenase acdD then hydroxylates L-kynurenine to afford 3-hydroxy-L-kynurenine. 3-hydroxy-L-kynurenine is activated by the A domain of the NRPS-PKS acdB and subsequently loaded onto the enzyme. The KS domain conducts the decarboxylative condensation of the 3-hydroxy-L-kynurenyl and malonyl moieties, and subsequent nucleophilic attacks by the two amino groups would occur nonenzymatically at two distinct positions, achieving the chain release and the construction of the tricyclic system. Finally, a dehydration reaction completes the biosynthesis to yield aspcandine. The chain is Indoleamine 2,3-dioxygenase acdA from Aspergillus candidus.